Reading from the N-terminus, the 683-residue chain is Pre-mRNA-splicing factor CLF1 (683 aa).

HAT repeat units lie at residues 40 to 72, 74 to 106, 108 to 140, 142 to 173, 175 to 206, 291 to 323, 336 to 367, 374 to 407, 409 to 440, 442 to 474, 476 to 513, 515 to 547, and 582 to 620; these read DWQR…FEYE, RDMR…CELR, RDVN…MEES, GQVE…FETR, GQVE…FERK, SILF…LLEE, ATVK…FLET, LTRS…FEIR, EKLD…LEIK, KEFD…LEEN, GDED…FETD, SEFE…YESS, and ENKE…YESI.

It belongs to the crooked-neck family. As to quaternary structure, associated with the spliceosome.

The protein localises to the nucleus. In terms of biological role, involved in pre-mRNA splicing and cell cycle progression. Required for the spliceosome assembly and initiation of the DNA replication. This chain is Pre-mRNA-splicing factor CLF1 (CLF1), found in Eremothecium gossypii (strain ATCC 10895 / CBS 109.51 / FGSC 9923 / NRRL Y-1056) (Yeast).